The sequence spans 175 residues: Granulocyte colony-stimulating factor (175 aa).

Intrachain disulfides connect Cys-37/Cys-43 and Cys-65/Cys-75. Thr-134 is a glycosylation site (O-linked (GalNAc...) threonine).

It belongs to the IL-6 superfamily. Monomer. Post-translationally, O-glycosylated.

The protein resides in the secreted. In terms of biological role, granulocyte/macrophage colony-stimulating factors are cytokines that act in hematopoiesis by controlling the production, differentiation, and function of 2 related white cell populations of the blood, the granulocytes and the monocytes-macrophages. This CSF induces granulocytes. This Canis lupus familiaris (Dog) protein is Granulocyte colony-stimulating factor (CSF3).